The sequence spans 100 residues: UPF0213 protein YhbQ (100 aa).

Residues 2 to 77 form the GIY-YIG domain; that stretch reads TPWFLYLIRT…KQLTKRQKER (76 aa).

This sequence belongs to the UPF0213 family.

The protein is UPF0213 protein YhbQ of Escherichia coli O7:K1 (strain IAI39 / ExPEC).